The sequence spans 533 residues: CTP synthase (533 aa).

Residues 1 to 265 (MTKFIFVTGG…ARYLVRRLGL (265 aa)) are amidoligase domain. Residue Ser13 participates in CTP binding. Ser13 serves as a coordination point for UTP. 14-19 (GLGKGI) contributes to the ATP binding site. Tyr54 provides a ligand contact to L-glutamine. Asp71 is a binding site for ATP. Residues Asp71 and Glu139 each contribute to the Mg(2+) site. CTP is bound by residues 146–148 (DIE), 186–191 (KTKPTQ), and Lys222. UTP contacts are provided by residues 186–191 (KTKPTQ) and Lys222. The Glutamine amidotransferase type-1 domain occupies 290 to 532 (EIAIVGKYVK…VRAARERKYG (243 aa)). Gly351 is a binding site for L-glutamine. Cys378 acts as the Nucleophile; for glutamine hydrolysis in catalysis. Residues 379–382 (FGFQ), Glu402, and Arg459 contribute to the L-glutamine site. Residues His505 and Glu507 contribute to the active site.

This sequence belongs to the CTP synthase family. In terms of assembly, homotetramer.

The enzyme catalyses UTP + L-glutamine + ATP + H2O = CTP + L-glutamate + ADP + phosphate + 2 H(+). It carries out the reaction L-glutamine + H2O = L-glutamate + NH4(+). The catalysed reaction is UTP + NH4(+) + ATP = CTP + ADP + phosphate + 2 H(+). It participates in pyrimidine metabolism; CTP biosynthesis via de novo pathway; CTP from UDP: step 2/2. Its activity is regulated as follows. Allosterically activated by GTP, when glutamine is the substrate; GTP has no effect on the reaction when ammonia is the substrate. The allosteric effector GTP functions by stabilizing the protein conformation that binds the tetrahedral intermediate(s) formed during glutamine hydrolysis. Inhibited by the product CTP, via allosteric rather than competitive inhibition. Its function is as follows. Catalyzes the ATP-dependent amination of UTP to CTP with either L-glutamine or ammonia as the source of nitrogen. Regulates intracellular CTP levels through interactions with the four ribonucleotide triphosphates. This Thermococcus gammatolerans (strain DSM 15229 / JCM 11827 / EJ3) protein is CTP synthase.